A 290-amino-acid chain; its full sequence is Coiled-coil domain-containing protein 137 (290 aa).

4 disordered regions span residues 1 to 92 (MARP…EAQV), 98 to 117 (LEKEAKGEEPDIAVPKFKQR), 139 to 181 (LSKN…EARA), and 269 to 290 (RQEMTPAQPPGSSFQRQGHACL). Residues 20–39 (SGQPQGRRQQQAQGQQRSAS) are compositionally biased toward low complexity. A compositionally biased stretch (basic and acidic residues) spans 56–79 (KNQDEQEIPFRLREIMRSRQEMKK). Residues 66–89 (RLREIMRSRQEMKKTLSNKKRKKE) are a coiled coil. Basic and acidic residues predominate over residues 154 to 163 (PKKEKSERKK). The stretch at 155-192 (KKEKSERKKAFQKRRLEKAQRKREARAVDRLEQELLKD) forms a coiled coil. Positions 164 to 178 (AFQKRRLEKAQRKRE) are enriched in basic residues.

It is found in the chromosome. This Mus musculus (Mouse) protein is Coiled-coil domain-containing protein 137 (Ccdc137).